Here is a 405-residue protein sequence, read N- to C-terminus: S-adenosylmethionine synthase (405 aa).

139 to 144 (GQGSVD) contributes to the ATP binding site.

It belongs to the AdoMet synthase 2 family. Mg(2+) serves as cofactor.

It carries out the reaction L-methionine + ATP + H2O = S-adenosyl-L-methionine + phosphate + diphosphate. It functions in the pathway amino-acid biosynthesis; S-adenosyl-L-methionine biosynthesis; S-adenosyl-L-methionine from L-methionine: step 1/1. In terms of biological role, catalyzes the formation of S-adenosylmethionine from methionine and ATP. The protein is S-adenosylmethionine synthase of Thermococcus onnurineus (strain NA1).